Consider the following 287-residue polypeptide: uncharacterized protein (287 aa).

This is an uncharacterized protein from Methanocaldococcus jannaschii (strain ATCC 43067 / DSM 2661 / JAL-1 / JCM 10045 / NBRC 100440) (Methanococcus jannaschii).